The following is a 413-amino-acid chain: MSASVSPLAPKHYPAMPVIHGVRIATAAAGIKYKGRTDLMLMVFDRPAEAAGVFTRSLCPSAPVDFCRRNLVHGKARAVVVNSGNANAFTGLKGREATQATAEAAAKAIGCATTDIFLASTGVIGEPLDAGKFSHLLGDMAESATEDFWTEAAKAIMTTDTYPKVATETVLLGQVPVTINGIAKGAGMIAPDMATMLSFVVTDAPIKADALQSLLSKGVGSTFNSVTVDSDTSTSDTLMLFATGTAAERGAPEITDAADKRLADFKKALGRVLKSLALQVVRDGEGARKMVEVEVTGAKSAASAKKIALSIANSPLVKTAVAGEDANWGRVVMAVGKAGEPADRDRLAIWFGDIRVAHQGERDPAYSEDATSAYMEGEDIRIRVDLGIGRGKATVWTCDLTKEYVAINGDYRS.

Substrate is bound by residues Thr158, Lys184, Thr195, Glu285, Asn408, and Ser413. Thr195 acts as the Nucleophile in catalysis.

This sequence belongs to the ArgJ family. As to quaternary structure, heterotetramer of two alpha and two beta chains.

The protein resides in the cytoplasm. It carries out the reaction N(2)-acetyl-L-ornithine + L-glutamate = N-acetyl-L-glutamate + L-ornithine. The catalysed reaction is L-glutamate + acetyl-CoA = N-acetyl-L-glutamate + CoA + H(+). It participates in amino-acid biosynthesis; L-arginine biosynthesis; L-ornithine and N-acetyl-L-glutamate from L-glutamate and N(2)-acetyl-L-ornithine (cyclic): step 1/1. Its pathway is amino-acid biosynthesis; L-arginine biosynthesis; N(2)-acetyl-L-ornithine from L-glutamate: step 1/4. Functionally, catalyzes two activities which are involved in the cyclic version of arginine biosynthesis: the synthesis of N-acetylglutamate from glutamate and acetyl-CoA as the acetyl donor, and of ornithine by transacetylation between N(2)-acetylornithine and glutamate. In Brucella suis biovar 1 (strain 1330), this protein is Arginine biosynthesis bifunctional protein ArgJ.